The following is a 389-amino-acid chain: Tyrosinase-like protein phomQ1 (389 aa).

A helical transmembrane segment spans residues 53–73 (TIIVVSVITFAAIIGCWVFLS). Residues His-141 and His-150 each contribute to the Cu cation site. N-linked (GlcNAc...) asparagine glycosylation occurs at Asn-220. Cu cation-binding residues include His-290 and His-316.

This sequence belongs to the tyrosinase family. It depends on Cu(2+) as a cofactor.

The protein localises to the membrane. The protein operates within mycotoxin biosynthesis. Its function is as follows. Tyrosinase-like protein; part of the gene cluster that mediates the biosynthesis of the phomopsins, a group of hexapeptide mycotoxins which infects lupins and causes lupinosis disease in livestock. Within the pathway, phomQ1 functions as a halogenase, converting. The pathway starts with the processing of the precursor phomA by several endopeptidases including kexin proteases as well as the cluster-specific S41 family peptidase phomP1 and the oligopeptidase phomG to produce 10 identical copies of the hexapeptide Tyr-Val-Ile-Pro-Ile-Asp. After being excised from the precursor peptide, the core peptides are cyclized and modified post-translationally by enzymes encoded within the gene cluster. The timing and order of proteolysis of the phomA precursor and PTMs are still unknown. Two tyrosinase-like enzymes, phomQ1 and phomQ2, catalyze the chlorination and hydroxylation of Tyr, respectively. PhomYb, is proposed to be involved in the construction of the macrocyclic structure. The other 4 ustYa family proteins may be involved in PTMs that generate the unique structure of phomopsin A. PhomYa is required for the hydroxylation of C-beta of Tyr. PhomYc, phomYd, and phomYe are responsible for the biosynthesis of 2,3-dehydroisoleucine (dIle), 2,3-dehydroaspartic acid (dAsp), and 3,4-dehydroproline (dPro), respectively. While dIle formation by phomYc is indispensable for the installation of dAsp by phomYd, the order of the other PTMs have not been elucidated yet. Most of the biosynthetic enzymes likely have broad substrate specificity, and thus, there might be a metabolic grid from a precursor to phomopsin A. The enzyme(s) responsible for the biosynthesis of 3,4-dehydrovaline (dVal) have also not been identified yet. Finally, phomM acts as an S-adenosylmethionine-dependent alpha-N-methyltransferase that catalyzes two successive N-methylation reactions, converting N-desmethyl-phomopsin A to phomopsin A and phomopsin A further to an N,N-dimethylated congener called phomopsin E. This is Tyrosinase-like protein phomQ1 from Diaporthe leptostromiformis (Lupinosis disease fungus).